A 154-amino-acid polypeptide reads, in one-letter code: Transcriptional repressor NrdR (154 aa).

A zinc finger lies at 3–34; it reads CPTCKYNGTRVVDSRPADDGNSIRRRRECEKC. Residues 49–139 enclose the ATP-cone domain; it reads LIVVKKDGAR…VYRQFKDISV (91 aa).

The protein belongs to the NrdR family. Requires Zn(2+) as cofactor.

Its function is as follows. Negatively regulates transcription of bacterial ribonucleotide reductase nrd genes and operons by binding to NrdR-boxes. This chain is Transcriptional repressor NrdR, found in Listeria welshimeri serovar 6b (strain ATCC 35897 / DSM 20650 / CCUG 15529 / CIP 8149 / NCTC 11857 / SLCC 5334 / V8).